Reading from the N-terminus, the 307-residue chain is 4-hydroxy-tetrahydrodipicolinate synthase (307 aa).

Residue Thr-57 participates in pyruvate binding. Tyr-145 functions as the Proton donor/acceptor in the catalytic mechanism. Lys-173 (schiff-base intermediate with substrate) is an active-site residue. A pyruvate-binding site is contributed by Val-215.

This sequence belongs to the DapA family. In terms of assembly, homotetramer; dimer of dimers.

The protein localises to the cytoplasm. It carries out the reaction L-aspartate 4-semialdehyde + pyruvate = (2S,4S)-4-hydroxy-2,3,4,5-tetrahydrodipicolinate + H2O + H(+). Its pathway is amino-acid biosynthesis; L-lysine biosynthesis via DAP pathway; (S)-tetrahydrodipicolinate from L-aspartate: step 3/4. Functionally, catalyzes the condensation of (S)-aspartate-beta-semialdehyde [(S)-ASA] and pyruvate to 4-hydroxy-tetrahydrodipicolinate (HTPA). The chain is 4-hydroxy-tetrahydrodipicolinate synthase from Leptospira interrogans serogroup Icterohaemorrhagiae serovar copenhageni (strain Fiocruz L1-130).